A 134-amino-acid polypeptide reads, in one-letter code: MTLRRGSCPLLLFSLVGLLTTCAQEPDAAGQNTTAVAEKAGTCPQAELEMPDRNCTEACQSDAGCEENKKCCRTGCGTSCQIPDEKPGSCPNVDTPIPPLGLCKTTCSKDSDCSETKKCCKNGCGFMTCTTARP.

The N-terminal stretch at 1-23 is a signal peptide; sequence MTLRRGSCPLLLFSLVGLLTTCA. 2 consecutive WAP domains span residues 36 to 82 and 83 to 133; these read VAEK…SCQI and PDEK…TTAR. 8 disulfides stabilise this stretch: C43-C72, C55-C76, C59-C71, C65-C80, C90-C120, C103-C124, C107-C119, and C113-C129.

Belongs to the venom waprin family. As to expression, expressed by the venom gland.

Its subcellular location is the secreted. Functionally, damages membranes of susceptible bacteria. Has no hemolytic activity. Not toxic to mice. Does not inhibit the proteinases elastase and cathepsin G. This chain is Waprin-Phi1, found in Philodryas olfersii (Green snake).